Here is a 272-residue protein sequence, read N- to C-terminus: MSRIAATFERLRGQRRTALIPYITAGDPYADATVDIMLAMAGAGADVIELGVPFSDPMADGPVIQKASERALAKGIGMGQVLAMVRSFREHNDTTPVVLMGYANPVERYGIDRFVADAKSAGVDGVLVVDYPPEECEAFAAQLQGADLDPIFLLAPTSTEQRMKDVGRIARGYVYYVSLKGVTGAGHLDTDAVATMLPRIREHVKVPVGVGFGIRDAATAKALAAVADAVVIGSRIVQLLEAEPRESVAAVGGTFIASIREALDSSTEGVRA.

Catalysis depends on proton acceptor residues E49 and D60.

Belongs to the TrpA family. In terms of assembly, tetramer of two alpha and two beta chains.

The enzyme catalyses (1S,2R)-1-C-(indol-3-yl)glycerol 3-phosphate + L-serine = D-glyceraldehyde 3-phosphate + L-tryptophan + H2O. It functions in the pathway amino-acid biosynthesis; L-tryptophan biosynthesis; L-tryptophan from chorismate: step 5/5. The alpha subunit is responsible for the aldol cleavage of indoleglycerol phosphate to indole and glyceraldehyde 3-phosphate. This is Tryptophan synthase alpha chain from Methylibium petroleiphilum (strain ATCC BAA-1232 / LMG 22953 / PM1).